Consider the following 112-residue polypeptide: Gastrula zinc finger protein XlCGF9.1 (112 aa).

C2H2-type zinc fingers lie at residues 6–28, 34–56, 62–84, and 90–112; these read FICS…MKIH, FCCP…ERTH, FTCP…RIIH, and YSCP…FKIH.

It belongs to the krueppel C2H2-type zinc-finger protein family.

The protein localises to the nucleus. May be involved in transcriptional regulation. This is Gastrula zinc finger protein XlCGF9.1 from Xenopus laevis (African clawed frog).